Reading from the N-terminus, the 201-residue chain is 3-isopropylmalate dehydratase small subunit (201 aa).

It belongs to the LeuD family. LeuD type 1 subfamily. Heterodimer of LeuC and LeuD.

It carries out the reaction (2R,3S)-3-isopropylmalate = (2S)-2-isopropylmalate. The protein operates within amino-acid biosynthesis; L-leucine biosynthesis; L-leucine from 3-methyl-2-oxobutanoate: step 2/4. Catalyzes the isomerization between 2-isopropylmalate and 3-isopropylmalate, via the formation of 2-isopropylmaleate. This Mesorhizobium japonicum (strain LMG 29417 / CECT 9101 / MAFF 303099) (Mesorhizobium loti (strain MAFF 303099)) protein is 3-isopropylmalate dehydratase small subunit.